Here is a 421-residue protein sequence, read N- to C-terminus: D-amino acid dehydrogenase (421 aa).

3 to 17 (VLVLGGGVVGVTSAY) is a binding site for FAD.

It belongs to the DadA oxidoreductase family. FAD is required as a cofactor.

It carries out the reaction a D-alpha-amino acid + A + H2O = a 2-oxocarboxylate + AH2 + NH4(+). The protein operates within amino-acid degradation; D-alanine degradation; NH(3) and pyruvate from D-alanine: step 1/1. Functionally, oxidative deamination of D-amino acids. In Methylobacterium sp. (strain 4-46), this protein is D-amino acid dehydrogenase.